We begin with the raw amino-acid sequence, 397 residues long: Phosphopentomutase (397 aa).

Residues D10, D296, H301, D337, H338, and H349 each contribute to the Mn(2+) site.

It belongs to the phosphopentomutase family. Requires Mn(2+) as cofactor.

Its subcellular location is the cytoplasm. The catalysed reaction is 2-deoxy-alpha-D-ribose 1-phosphate = 2-deoxy-D-ribose 5-phosphate. It catalyses the reaction alpha-D-ribose 1-phosphate = D-ribose 5-phosphate. Its pathway is carbohydrate degradation; 2-deoxy-D-ribose 1-phosphate degradation; D-glyceraldehyde 3-phosphate and acetaldehyde from 2-deoxy-alpha-D-ribose 1-phosphate: step 1/2. Functionally, isomerase that catalyzes the conversion of deoxy-ribose 1-phosphate (dRib-1-P) and ribose 1-phosphate (Rib-1-P) to deoxy-ribose 5-phosphate (dRib-5-P) and ribose 5-phosphate (Rib-5-P), respectively. This Elusimicrobium minutum (strain Pei191) protein is Phosphopentomutase.